A 379-amino-acid polypeptide reads, in one-letter code: Pectin lyase A (379 aa).

The signal sequence occupies residues 1-20 (MKTTFLVSLATAALSSTAAA). 2 cysteine pairs are disulfide-bonded: Cys-83–Cys-102 and Cys-92–Cys-226. The active site involves Arg-256. Cysteines 323 and 331 form a disulfide.

Belongs to the polysaccharide lyase 1 family.

It is found in the secreted. It catalyses the reaction Eliminative cleavage of (1-&gt;4)-alpha-D-galacturonan methyl ester to give oligosaccharides with 4-deoxy-6-O-methyl-alpha-D-galact-4-enuronosyl groups at their non-reducing ends.. Its function is as follows. Pectinolytic enzymes consist of four classes of enzymes: pectin lyase, polygalacturonase, pectin methylesterase and rhamnogalacturonase. Among pectinolytic enzymes, pectin lyase is the most important in depolymerization of pectin, since it cleaves internal glycosidic bonds of highly methylated pectins. The polypeptide is Pectin lyase A (pelA) (Emericella nidulans (strain FGSC A4 / ATCC 38163 / CBS 112.46 / NRRL 194 / M139) (Aspergillus nidulans)).